The primary structure comprises 32 residues: Photosystem I reaction center subunit XII (32 aa).

The chain crosses the membrane as a helical span at residues 9-31 (VYVALVSALITSFLAVRLGLALY).

Belongs to the PsaM family.

The protein localises to the plastid. It localises to the chloroplast thylakoid membrane. The polypeptide is Photosystem I reaction center subunit XII (Chaetosphaeridium globosum (Charophycean green alga)).